The primary structure comprises 160 residues: 2-C-methyl-D-erythritol 2,4-cyclodiphosphate synthase (160 aa).

Asp-10 and His-12 together coordinate a divalent metal cation. Residues 10–12 (DVH) and 36–37 (HS) contribute to the 4-CDP-2-C-methyl-D-erythritol 2-phosphate site. A divalent metal cation is bound at residue His-44. Residues 58–60 (DIG), 63–67 (FPDTD), 102–108 (AQAPKML), 134–137 (TTTE), Phe-141, and Arg-144 contribute to the 4-CDP-2-C-methyl-D-erythritol 2-phosphate site.

The protein belongs to the IspF family. Homotrimer. A divalent metal cation serves as cofactor.

The catalysed reaction is 4-CDP-2-C-methyl-D-erythritol 2-phosphate = 2-C-methyl-D-erythritol 2,4-cyclic diphosphate + CMP. The protein operates within isoprenoid biosynthesis; isopentenyl diphosphate biosynthesis via DXP pathway; isopentenyl diphosphate from 1-deoxy-D-xylulose 5-phosphate: step 4/6. In terms of biological role, involved in the biosynthesis of isopentenyl diphosphate (IPP) and dimethylallyl diphosphate (DMAPP), two major building blocks of isoprenoid compounds. Catalyzes the conversion of 4-diphosphocytidyl-2-C-methyl-D-erythritol 2-phosphate (CDP-ME2P) to 2-C-methyl-D-erythritol 2,4-cyclodiphosphate (ME-CPP) with a corresponding release of cytidine 5-monophosphate (CMP). This Shewanella amazonensis (strain ATCC BAA-1098 / SB2B) protein is 2-C-methyl-D-erythritol 2,4-cyclodiphosphate synthase.